A 695-amino-acid polypeptide reads, in one-letter code: MAKTRVYELAKRLKITTRELIDELEELGVSVKSHMSVLDDEIVNIIVGLYEEEEKAAKIKKSASSKKKTEKEVEEEEIETPKKKKKQEEKIPGEEKVLRITPDELKLDLLAEKMRVPVSKIVKDHFMKGIILRPAQSLSLEDANQIAAQYGWKLEIEKEEMADPLEALKKKYEELYKDESRLVQRPPVVTVMGHVDHGKTTLLDRIRKTSIAEKEVGGITQSIGAYHVEVNGKKITFIDTPGHEAFTEMRARGAQATDIVILVVAADDGVMPQTVEAYNHAKTAQVPIIVAINKIDKPNASIEATKQQLASKLGLVPEDWGGDTIVVPISAKTGQGIDELLEMILLVAEMSEIKCIPTGNARGIIIESELDKGVGPLATVIVKDGILEAGDYIVAGATYGKVRALRDEKGKRVKKAVPGDPVQIIGFNEVPDVHAILYVVDSLDQAREVAAFAQEKQKKEKLLKGKRHVRLEEFMRIGGKDETKVLNLILKSDSFGSVEALRQTIAKLETEEVHIEVVHFGIGTINASDVMLAAASDAVIIGYKVKPDSQARRQAEEEGVQIRVYQVIFDLIDDLKKALEGLLEPEEIDETVGHGEIRKVFKIKKVGSIAGVQLLDGYVTKKGFVRIYRNNQEIFDGEIESLKHYKDEVSRIDAPKECGIKFLNFDDIQEGDQLEFHVKRKVKRTLDFNESSSDS.

The interval Lys-60–Pro-92 is disordered. One can recognise a tr-type G domain in the interval Gln-184–Thr-358. Residues Gly-193–Thr-200 form a G1 region. Residue Gly-193–Thr-200 coordinates GTP. Residues Gly-218–Ser-222 are G2. The interval Asp-239 to Gly-242 is G3. Residues Asp-239–His-243 and Asn-293–Asp-296 contribute to the GTP site. The tract at residues Asn-293–Asp-296 is G4. Positions Ser-330–Lys-332 are G5.

Belongs to the TRAFAC class translation factor GTPase superfamily. Classic translation factor GTPase family. IF-2 subfamily.

It localises to the cytoplasm. In terms of biological role, one of the essential components for the initiation of protein synthesis. Protects formylmethionyl-tRNA from spontaneous hydrolysis and promotes its binding to the 30S ribosomal subunits. Also involved in the hydrolysis of GTP during the formation of the 70S ribosomal complex. This is Translation initiation factor IF-2 from Kosmotoga olearia (strain ATCC BAA-1733 / DSM 21960 / TBF 19.5.1).